A 374-amino-acid polypeptide reads, in one-letter code: Eukaryotic translation initiation factor 3 subunit M (374 aa).

Position 2 is an N-acetylserine (S2). Phosphoserine occurs at positions 2 and 152. The region spanning 180–339 (AASKVMVELL…RKVVVSHSTH (160 aa)) is the PCI domain. K254 bears the N6-acetyllysine mark. S367 is subject to Phosphoserine.

This sequence belongs to the eIF-3 subunit M family. Component of the eukaryotic translation initiation factor 3 (eIF-3) complex, which is composed of 13 subunits: EIF3A, EIF3B, EIF3C, EIF3D, EIF3E, EIF3F, EIF3G, EIF3H, EIF3I, EIF3J, EIF3K, EIF3L and EIF3M. The eIF-3 complex appears to include 3 stable modules: module A is composed of EIF3A, EIF3B, EIF3G and EIF3I; module B is composed of EIF3F, EIF3H, and EIF3M; and module C is composed of EIF3C, EIF3D, EIF3E, EIF3K and EIF3L. EIF3C of module C binds EIF3B of module A and EIF3H of module B, thereby linking the three modules. EIF3J is a labile subunit that binds to the eIF-3 complex via EIF3B. The eIF-3 complex interacts with RPS6KB1 under conditions of nutrient depletion. Mitogenic stimulation leads to binding and activation of a complex composed of MTOR and RPTOR, leading to phosphorylation and release of RPS6KB1 and binding of EIF4B to eIF-3.

Its subcellular location is the cytoplasm. Functionally, component of the eukaryotic translation initiation factor 3 (eIF-3) complex, which is required for several steps in the initiation of protein synthesis. The eIF-3 complex associates with the 40S ribosome and facilitates the recruitment of eIF-1, eIF-1A, eIF-2:GTP:methionyl-tRNAi and eIF-5 to form the 43S pre-initiation complex (43S PIC). The eIF-3 complex stimulates mRNA recruitment to the 43S PIC and scanning of the mRNA for AUG recognition. The eIF-3 complex is also required for disassembly and recycling of post-termination ribosomal complexes and subsequently prevents premature joining of the 40S and 60S ribosomal subunits prior to initiation. The eIF-3 complex specifically targets and initiates translation of a subset of mRNAs involved in cell proliferation, including cell cycling, differentiation and apoptosis, and uses different modes of RNA stem-loop binding to exert either translational activation or repression. This is Eukaryotic translation initiation factor 3 subunit M (Eif3m) from Mus musculus (Mouse).